The primary structure comprises 142 residues: Large ribosomal subunit protein uL11 (142 aa).

This sequence belongs to the universal ribosomal protein uL11 family. In terms of assembly, part of the ribosomal stalk of the 50S ribosomal subunit. Interacts with L10 and the large rRNA to form the base of the stalk. L10 forms an elongated spine to which L12 dimers bind in a sequential fashion forming a multimeric L10(L12)X complex. One or more lysine residues are methylated.

Forms part of the ribosomal stalk which helps the ribosome interact with GTP-bound translation factors. This chain is Large ribosomal subunit protein uL11, found in Cronobacter sakazakii (strain ATCC BAA-894) (Enterobacter sakazakii).